The following is a 487-amino-acid chain: Pentatricopeptide repeat-containing protein At5g61370, mitochondrial (487 aa).

A mitochondrion-targeting transit peptide spans 1 to 90; the sequence is MMSTTVRLNR…TSPRRLLRFF (90 aa). 8 PPR repeats span residues 137 to 171, 172 to 202, 207 to 241, 242 to 283, 284 to 318, 319 to 353, 354 to 388, and 389 to 423; these read DKQT…SCPQ, DGFT…HKDV, ELSV…GITP, DLFC…KIQP, TSMS…GCDP, DTGS…GFRP, ERKF…SVGG, and YGQV…DVTL. The interval 466–487 is disordered; the sequence is TKPKLKLKPKRRSKTKKKNLQH.

The protein belongs to the PPR family. P subfamily.

The protein resides in the mitochondrion. This Arabidopsis thaliana (Mouse-ear cress) protein is Pentatricopeptide repeat-containing protein At5g61370, mitochondrial.